The primary structure comprises 208 residues: Endo-1,4-beta-xylanase B (208 aa).

Positions M1–A16 are cleaved as a signal peptide. Residues A17–S207 enclose the GH11 domain. E101 (nucleophile) is an active-site residue. Catalysis depends on E194, which acts as the Proton donor.

It belongs to the glycosyl hydrolase 11 (cellulase G) family.

The protein resides in the secreted. The catalysed reaction is Endohydrolysis of (1-&gt;4)-beta-D-xylosidic linkages in xylans.. The protein operates within glycan degradation; xylan degradation. N-bromosuccinimide completely inhibits the catalytic activity. Its function is as follows. Endo-1,4-beta-xylanase involved in the hydrolysis of xylan, a major structural heterogeneous polysaccharide found in plant biomass representing the second most abundant polysaccharide in the biosphere, after cellulose. This chain is Endo-1,4-beta-xylanase B (xynB), found in Talaromyces purpureogenus (Soft rot fungus).